The chain runs to 229 residues: Potassium/proton antiporter CemA (229 aa).

3 helical membrane passes run 7 to 27 (FTPLLYLASLVFLPWWISLSF), 114 to 134 (IICFVILSGYSIWGNEELVIL), and 189 to 209 (ILSGLVSTFPVILDTLFKFWI).

Belongs to the CemA family.

The protein resides in the plastid. It localises to the chloroplast inner membrane. It catalyses the reaction K(+)(in) + H(+)(out) = K(+)(out) + H(+)(in). Contributes to K(+)/H(+) antiport activity by supporting proton efflux to control proton extrusion and homeostasis in chloroplasts in a light-dependent manner to modulate photosynthesis. Prevents excessive induction of non-photochemical quenching (NPQ) under continuous-light conditions. Indirectly promotes efficient inorganic carbon uptake into chloroplasts. The chain is Potassium/proton antiporter CemA from Panax ginseng (Korean ginseng).